A 134-amino-acid polypeptide reads, in one-letter code: Thionin-2.1 (134 aa).

An N-terminal signal peptide occupies residues 1–24 (MKGRILILSLLIMSLVMAQVQVEA). Intrachain disulfides connect Cys-27–Cys-61, Cys-28–Cys-55, and Cys-40–Cys-49. Positions 68–134 (AILENSADAT…VVPPGPPKLL (67 aa)) are cleaved as a propeptide — acidic domain.

This sequence belongs to the plant thionin (TC 1.C.44) family. In terms of tissue distribution, detected in rosette leaves and at a very high level in flowers and in siliques.

The protein resides in the secreted. Seems to function as a defense factor. Thionins are small plant proteins which are toxic to animal cells. They seem to exert their toxic effect at the level of the cell membrane. Their precise function is not known. In Arabidopsis thaliana (Mouse-ear cress), this protein is Thionin-2.1 (THI2.1).